The sequence spans 111 residues: Nitrogen regulatory protein P-II (111 aa).

Tyrosine 50 carries the post-translational modification O-UMP-tyrosine.

Belongs to the P(II) protein family. In terms of assembly, homotrimer.

Its function is as follows. In nitrogen-limiting conditions, when the ratio of Gln to 2-ketoglutarate decreases, P-II is uridylylated to P-II-UMP. P-II-UMP allows the deadenylation of glutamine synthetase (GS), thus activating the enzyme. Conversely, in nitrogen excess P-II is deuridylated and promotes the adenylation of GS. P-II indirectly controls the transcription of the GS gene (glnA). P-II prevents NR-II-catalyzed conversion of NR-I to NR-I-phosphate, the transcriptional activator of glnA. When P-II is uridylylated to P-II-UMP, these events are reversed. The sequence is that of Nitrogen regulatory protein P-II (glnB) from Rhizobium leguminosarum bv. viciae.